The following is a 515-amino-acid chain: Tetratricopeptide repeat protein 8 (515 aa).

One copy of the TPR 1 repeat lies at 4-37; it reads EMEPLLRAWSYFRRRKFQLCADLCTQMLEKSPYD. 2 disordered regions span residues 89-109 and 118-137; these read RPGTSLKLPGTNQTGGPTQAV and PITGFLRPSTQSGRPGTMEQ. TPR repeat units lie at residues 225 to 258, 259 to 291, 292 to 325, 326 to 359, 360 to 393, 397 to 430, and 432 to 464; these read WWWKVQIGKCYYRLGMYREAEKQFKSALKQQEMV, DTFLYLAKVYIILDQPVTALNLFKQGLDKFPGE, VTLLCGIARIYEEMNNSSSAAEYYKEVLKQDNTH, VEAIACIGSNHFYSDQPEVALRFYRRLLQMGVYN, CQLFNNLGLCCFYAQQYDMTLTSFERALSLAENE, ADVWYNLGHIAVGIGDTNLAHQCFRLALVHNNHH, and EAYNNLAVLEMRKGHVEQARALLQTASSLAPHM.

As to quaternary structure, part of BBSome complex, that contains BBS1, BBS2, BBS4, BBS5, BBS7, BBS8/TTC8, BBS9 and BBIP10. Interacts with PCM1. Interacts with CCDC28B. Interacts with PKD1. As to expression, isoform 1 is retina-specific whereas isoform 2 is ubiquitously expressed.

It localises to the cytoplasm. Its subcellular location is the cytoskeleton. It is found in the microtubule organizing center. The protein localises to the centrosome. The protein resides in the centriole. It localises to the cell projection. Its subcellular location is the cilium membrane. It is found in the centriolar satellite. The protein localises to the cilium. Its function is as follows. The BBSome complex is thought to function as a coat complex required for sorting of specific membrane proteins to the primary cilia. The BBSome complex is required for ciliogenesis but is dispensable for centriolar satellite function. This ciliogenic function is mediated in part by the Rab8 GDP/GTP exchange factor, which localizes to the basal body and contacts the BBSome. Rab8(GTP) enters the primary cilium and promotes extension of the ciliary membrane. Firstly the BBSome associates with the ciliary membrane and binds to RAB3IP/Rabin8, the guanosyl exchange factor (GEF) for Rab8 and then the Rab8-GTP localizes to the cilium and promotes docking and fusion of carrier vesicles to the base of the ciliary membrane. The BBSome complex, together with the LTZL1, controls SMO ciliary trafficking and contributes to the sonic hedgehog (SHH) pathway regulation. Required for proper BBSome complex assembly and its ciliary localization. The chain is Tetratricopeptide repeat protein 8 (Ttc8) from Mus musculus (Mouse).